A 465-amino-acid chain; its full sequence is 3-isopropylmalate dehydratase large subunit (465 aa).

The [4Fe-4S] cluster site is built by Cys-347, Cys-407, and Cys-410.

The protein belongs to the aconitase/IPM isomerase family. LeuC type 1 subfamily. Heterodimer of LeuC and LeuD. [4Fe-4S] cluster is required as a cofactor.

It carries out the reaction (2R,3S)-3-isopropylmalate = (2S)-2-isopropylmalate. It functions in the pathway amino-acid biosynthesis; L-leucine biosynthesis; L-leucine from 3-methyl-2-oxobutanoate: step 2/4. Its function is as follows. Catalyzes the isomerization between 2-isopropylmalate and 3-isopropylmalate, via the formation of 2-isopropylmaleate. This chain is 3-isopropylmalate dehydratase large subunit, found in Aeromonas hydrophila subsp. hydrophila (strain ATCC 7966 / DSM 30187 / BCRC 13018 / CCUG 14551 / JCM 1027 / KCTC 2358 / NCIMB 9240 / NCTC 8049).